Consider the following 504-residue polypeptide: 26S proteasome non-ATPase regulatory subunit 5 (504 aa).

The residue at position 2 (Ala-2) is an N-acetylalanine.

It belongs to the proteasome subunit S5B/HSM3 family. In terms of assembly, interacts with PSMC1, PSMC2, PSMD1 and PSMD6. Part of transient complex containing PSMD5, PSMC2, PSMC1 and PSMD2 formed during the assembly of the 26S proteasome.

In terms of biological role, acts as a chaperone during the assembly of the 26S proteasome, specifically of the base subcomplex of the PA700/19S regulatory complex (RC). In the initial step of the base subcomplex assembly is part of an intermediate PSMD5:PSMC2:PSMC1:PSMD2 module which probably assembles with a PSMD10:PSMC4:PSMC5:PAAF1 module followed by dissociation of PSMD5. The chain is 26S proteasome non-ATPase regulatory subunit 5 (PSMD5) from Homo sapiens (Human).